Here is a 277-residue protein sequence, read N- to C-terminus: Energy-coupling factor transporter ATP-binding protein EcfA1 (277 aa).

Positions 5-243 (IRAQNVSFCY…VEVLKKIGLD (239 aa)) constitute an ABC transporter domain. 42–49 (GHNGSGKS) serves as a coordination point for ATP.

It belongs to the ABC transporter superfamily. Energy-coupling factor EcfA family. As to quaternary structure, forms a stable energy-coupling factor (ECF) transporter complex composed of 2 membrane-embedded substrate-binding proteins (S component), 2 ATP-binding proteins (A component) and 2 transmembrane proteins (T component).

Its subcellular location is the cell membrane. ATP-binding (A) component of a common energy-coupling factor (ECF) ABC-transporter complex. Unlike classic ABC transporters this ECF transporter provides the energy necessary to transport a number of different substrates. The sequence is that of Energy-coupling factor transporter ATP-binding protein EcfA1 from Caldanaerobacter subterraneus subsp. tengcongensis (strain DSM 15242 / JCM 11007 / NBRC 100824 / MB4) (Thermoanaerobacter tengcongensis).